The following is a 364-amino-acid chain: MSAPLANDTFLRALRRQPTEYTPLWLMRQAGRYLPEYNATRARAGSFLGLAKSPAYATEVTLQPLDRYPLDAAILFSDILTVPDAMGLGLSFEQGEGPRFARPVRSEADVAALSVPDMASLQYVFDAVSEIRRALVQDGRQRVPLIGFSGSPWTLACYMVEGGGSDDFRTVKSMLYARPDLMHRILEINAAAVIDYLNAQIDAGAQAVMVFDTWGGALADGIYQTFSLAYMARVVEGLRAGADGQRVPVILFTKGGGLWLESMAQTGADALGVDWTVNLQLARVRTGGRVALQGNLDPTVLFAEPDAIRAQVRRVLEDYAAGGDSDGHVFNLGHGISQFTPPESVAVLVDEVHTFSRALRTRLP.

Residues 28–32, Phe-47, Asp-78, Tyr-158, Thr-213, and His-334 each bind substrate; that span reads RQAGR.

It belongs to the uroporphyrinogen decarboxylase family. In terms of assembly, homodimer.

The protein resides in the cytoplasm. It carries out the reaction uroporphyrinogen III + 4 H(+) = coproporphyrinogen III + 4 CO2. Its pathway is porphyrin-containing compound metabolism; protoporphyrin-IX biosynthesis; coproporphyrinogen-III from 5-aminolevulinate: step 4/4. Its function is as follows. Catalyzes the decarboxylation of four acetate groups of uroporphyrinogen-III to yield coproporphyrinogen-III. The chain is Uroporphyrinogen decarboxylase from Ralstonia nicotianae (strain ATCC BAA-1114 / GMI1000) (Ralstonia solanacearum).